Consider the following 146-residue polypeptide: UPF0178 protein BAMEG_1545 (146 aa).

Belongs to the UPF0178 family.

This is UPF0178 protein BAMEG_1545 from Bacillus anthracis (strain CDC 684 / NRRL 3495).